Consider the following 102-residue polypeptide: MTPGELLPSDGPDHVLNPDRRTLTLVIENGGDRPIQVGSHYHFAETNGALRFDRAAAHGMRLNIASGTAVRFEPGQQRTVELVDYAGDRTVYGFRGLVQGKL.

Belongs to the urease beta subunit family. In terms of assembly, heterotrimer of UreA (gamma), UreB (beta) and UreC (alpha) subunits. Three heterotrimers associate to form the active enzyme.

The protein localises to the cytoplasm. The catalysed reaction is urea + 2 H2O + H(+) = hydrogencarbonate + 2 NH4(+). Its pathway is nitrogen metabolism; urea degradation; CO(2) and NH(3) from urea (urease route): step 1/1. The protein is Urease subunit beta of Methylibium petroleiphilum (strain ATCC BAA-1232 / LMG 22953 / PM1).